Here is a 568-residue protein sequence, read N- to C-terminus: MSVSVFNRCWSKVILETLVRQGVSHVCIAPGSRSTPLTLEAVRLQNAGSVTCHTHFDERGLGFFALGIAKATQSPVAIIVTSGTATANLYPAIIEARQTGVNLFVLTADRPPELWECGANQAILQQNMFGQYPVANVNLPKPNADYSAQWLISLLEQAAFQQKQQGGVVHINVPFAEPLYDATDEEVNSHSWLQPLQRWLIQKKSWINVEVQQNEVLMHENWDHWRTKRGVVVVGQLPAEQAMGINSWASAMGWVLLTDIQSGVVPTTPYEDIWLANQTVREKLLQADIVIQFGARFISKRINQFLQAFKGEFWLVEQSGKALDPYHHSLTRFNAKVHHWLRAHPPLRQKPWLLEPLALSKFCATFIEQQVGGNLTEASLALRLPTLLPYNGVLFLGNSLLVRLVDALTQLPESYPVYTNRGASGIDGLLATAAGIGIGSNKPVVAVIGDTSTLYDLNSFALFKNVTQPTLIFVINNNGGAIFDMLPVDEQVKDQFYRLPHNGDFSQIAAMFDLKYAHPYTWADLNSVVKQAYSRRKATLIEIKTNPSDGSSLYKRLIEQISHAVIGA.

Belongs to the TPP enzyme family. MenD subfamily. Homodimer. Requires Mg(2+) as cofactor. The cofactor is Mn(2+). Thiamine diphosphate is required as a cofactor.

The enzyme catalyses isochorismate + 2-oxoglutarate + H(+) = 5-enolpyruvoyl-6-hydroxy-2-succinyl-cyclohex-3-ene-1-carboxylate + CO2. The protein operates within quinol/quinone metabolism; 1,4-dihydroxy-2-naphthoate biosynthesis; 1,4-dihydroxy-2-naphthoate from chorismate: step 2/7. It functions in the pathway quinol/quinone metabolism; menaquinone biosynthesis. Functionally, catalyzes the thiamine diphosphate-dependent decarboxylation of 2-oxoglutarate and the subsequent addition of the resulting succinic semialdehyde-thiamine pyrophosphate anion to isochorismate to yield 2-succinyl-5-enolpyruvyl-6-hydroxy-3-cyclohexene-1-carboxylate (SEPHCHC). This chain is 2-succinyl-5-enolpyruvyl-6-hydroxy-3-cyclohexene-1-carboxylate synthase, found in Haemophilus influenzae (strain PittGG).